The chain runs to 117 residues: Large ribosomal subunit protein bL20 (117 aa).

It belongs to the bacterial ribosomal protein bL20 family.

Binds directly to 23S ribosomal RNA and is necessary for the in vitro assembly process of the 50S ribosomal subunit. It is not involved in the protein synthesizing functions of that subunit. The polypeptide is Large ribosomal subunit protein bL20 (Pelotomaculum thermopropionicum (strain DSM 13744 / JCM 10971 / SI)).